The sequence spans 455 residues: Phosphomethylpyrimidine synthase (455 aa).

Residues N80, M109, Y139, H175, 195–197, 236–239, and E275 each bind substrate; these read SRG and DSLR. H279 is a Zn(2+) binding site. A substrate-binding site is contributed by Y302. Position 343 (H343) interacts with Zn(2+). [4Fe-4S] cluster is bound by residues C423, C426, and C431.

Belongs to the ThiC family. [4Fe-4S] cluster is required as a cofactor.

It catalyses the reaction 5-amino-1-(5-phospho-beta-D-ribosyl)imidazole + S-adenosyl-L-methionine = 4-amino-2-methyl-5-(phosphooxymethyl)pyrimidine + CO + 5'-deoxyadenosine + formate + L-methionine + 3 H(+). Its pathway is cofactor biosynthesis; thiamine diphosphate biosynthesis. Catalyzes the synthesis of the hydroxymethylpyrimidine phosphate (HMP-P) moiety of thiamine from aminoimidazole ribotide (AIR) in a radical S-adenosyl-L-methionine (SAM)-dependent reaction. In Synechococcus sp. (strain JA-2-3B'a(2-13)) (Cyanobacteria bacterium Yellowstone B-Prime), this protein is Phosphomethylpyrimidine synthase.